We begin with the raw amino-acid sequence, 316 residues long: Methionyl-tRNA formyltransferase (316 aa).

S108–P111 is a binding site for (6S)-5,6,7,8-tetrahydrofolate.

This sequence belongs to the Fmt family.

The enzyme catalyses L-methionyl-tRNA(fMet) + (6R)-10-formyltetrahydrofolate = N-formyl-L-methionyl-tRNA(fMet) + (6S)-5,6,7,8-tetrahydrofolate + H(+). In terms of biological role, attaches a formyl group to the free amino group of methionyl-tRNA(fMet). The formyl group appears to play a dual role in the initiator identity of N-formylmethionyl-tRNA by promoting its recognition by IF2 and preventing the misappropriation of this tRNA by the elongation apparatus. The sequence is that of Methionyl-tRNA formyltransferase from Heliobacterium modesticaldum (strain ATCC 51547 / Ice1).